The following is a 252-amino-acid chain: Cytochrome b6-f complex iron-sulfur subunit, chloroplastic (252 aa).

The helical transmembrane segment at 94–114 (LVLAAVAPVVASAGGCYLYYF) threads the bilayer. The Rieske domain maps to 141–235 (WFKSHKKNAR…VEDDNGKILL (95 aa)). Residues Cys181, His183, Cys199, and His202 each coordinate [2Fe-2S] cluster. A disulfide bridge links Cys186 with Cys201.

Belongs to the Rieske iron-sulfur protein family. In terms of assembly, the 4 large subunits of the cytochrome b6-f complex are cytochrome b6, subunit IV (17 kDa polypeptide, petD), cytochrome f and the Rieske protein, while the 4 small subunits are petG, petL, petM and petN. The complex functions as a dimer. [2Fe-2S] cluster serves as cofactor.

The protein resides in the plastid. It localises to the chloroplast thylakoid membrane. It carries out the reaction 2 oxidized [plastocyanin] + a plastoquinol + 2 H(+)(in) = 2 reduced [plastocyanin] + a plastoquinone + 4 H(+)(out). Component of the cytochrome b6-f complex, which mediates electron transfer between photosystem II (PSII) and photosystem I (PSI), cyclic electron flow around PSI, and state transitions. This Bigelowiella natans (Pedinomonas minutissima) protein is Cytochrome b6-f complex iron-sulfur subunit, chloroplastic (petC).